Here is a 333-residue protein sequence, read N- to C-terminus: Aspartate carbamoyltransferase catalytic subunit (333 aa).

Carbamoyl phosphate contacts are provided by Arg61 and Thr62. Position 89 (Lys89) interacts with L-aspartate. Carbamoyl phosphate-binding residues include Arg111, His144, and Gln147. Arg184 and Arg248 together coordinate L-aspartate. Residues Gly289 and Pro290 each contribute to the carbamoyl phosphate site.

This sequence belongs to the aspartate/ornithine carbamoyltransferase superfamily. ATCase family. Heterododecamer (2C3:3R2) of six catalytic PyrB chains organized as two trimers (C3), and six regulatory PyrI chains organized as three dimers (R2).

It catalyses the reaction carbamoyl phosphate + L-aspartate = N-carbamoyl-L-aspartate + phosphate + H(+). It participates in pyrimidine metabolism; UMP biosynthesis via de novo pathway; (S)-dihydroorotate from bicarbonate: step 2/3. Catalyzes the condensation of carbamoyl phosphate and aspartate to form carbamoyl aspartate and inorganic phosphate, the committed step in the de novo pyrimidine nucleotide biosynthesis pathway. This Trichormus variabilis (strain ATCC 29413 / PCC 7937) (Anabaena variabilis) protein is Aspartate carbamoyltransferase catalytic subunit.